The chain runs to 251 residues: Probable ATP-dependent transporter ycf16 (251 aa).

Residues 6 to 250 form the ABC transporter domain; the sequence is LEIKDLYASV…EKHGYDWITQ (245 aa). 38-45 lines the ATP pocket; that stretch reads GPNGSGKS.

It belongs to the ABC transporter superfamily. Ycf16 family.

The protein localises to the plastid. It localises to the chloroplast. The polypeptide is Probable ATP-dependent transporter ycf16 (ycf16) (Pyropia yezoensis (Susabi-nori)).